The following is a 514-amino-acid chain: 2,3-bisphosphoglycerate-independent phosphoglycerate mutase (514 aa).

Aspartate 14 and serine 64 together coordinate Mn(2+). Serine 64 functions as the Phosphoserine intermediate in the catalytic mechanism. Substrate is bound by residues histidine 125, 155 to 156 (RD), arginine 187, arginine 193, 263 to 266 (RADR), and lysine 337. Residues aspartate 404, histidine 408, aspartate 445, histidine 446, and histidine 464 each coordinate Mn(2+).

The protein belongs to the BPG-independent phosphoglycerate mutase family. Monomer. It depends on Mn(2+) as a cofactor.

It catalyses the reaction (2R)-2-phosphoglycerate = (2R)-3-phosphoglycerate. The protein operates within carbohydrate degradation; glycolysis; pyruvate from D-glyceraldehyde 3-phosphate: step 3/5. Catalyzes the interconversion of 2-phosphoglycerate and 3-phosphoglycerate. The protein is 2,3-bisphosphoglycerate-independent phosphoglycerate mutase of Serratia proteamaculans (strain 568).